The sequence spans 291 residues: NAD kinase (291 aa).

Residue D73 is the Proton acceptor of the active site. NAD(+)-binding positions include 73-74 (DG), 147-148 (ND), R175, D177, and Q246.

It belongs to the NAD kinase family. A divalent metal cation is required as a cofactor.

The protein localises to the cytoplasm. The catalysed reaction is NAD(+) + ATP = ADP + NADP(+) + H(+). In terms of biological role, involved in the regulation of the intracellular balance of NAD and NADP, and is a key enzyme in the biosynthesis of NADP. Catalyzes specifically the phosphorylation on 2'-hydroxyl of the adenosine moiety of NAD to yield NADP. The protein is NAD kinase of Chromobacterium violaceum (strain ATCC 12472 / DSM 30191 / JCM 1249 / CCUG 213 / NBRC 12614 / NCIMB 9131 / NCTC 9757 / MK).